A 256-amino-acid chain; its full sequence is MWLGAYTWLNVFGILLQAAFIQNILLANFLGMCSYLACSTRVSTANGLGMSVALVLTVTGSINWFVHAFITGPKALTWISPSLASVNLGFLELIIFIVVIAAFTQILELLLEKVSRNLYLSLGIFLPLIAVNCAILGGVLFGITRSYPFIPMMIFSLGAGCGWWLAIVILATIKEKLAYSDIPKNLQGMGISFITTGLIAMAFMSLTGIDISKPSAKIQRAPLETEVVENTTNPLKESSSKHQPSISKARTQRRSL.

The next 6 helical transmembrane spans lie at 1–21 (MWLG…AAFI), 50–70 (MSVA…HAFI), 83–103 (LASV…IAAF), 123–143 (GIFL…LFGI), 149–169 (FIPM…AIVI), and 189–209 (MGIS…LTGI). A compositionally biased stretch (polar residues) spans 229-249 (ENTTNPLKESSSKHQPSISKA). The disordered stretch occupies residues 229–256 (ENTTNPLKESSSKHQPSISKARTQRRSL).

The protein belongs to the NqrDE/RnfAE family. As to quaternary structure, composed of six subunits; NqrA, NqrB, NqrC, NqrD, NqrE and NqrF.

It is found in the cell inner membrane. The catalysed reaction is a ubiquinone + n Na(+)(in) + NADH + H(+) = a ubiquinol + n Na(+)(out) + NAD(+). Functionally, NQR complex catalyzes the reduction of ubiquinone-1 to ubiquinol by two successive reactions, coupled with the transport of Na(+) ions from the cytoplasm to the periplasm. NqrA to NqrE are probably involved in the second step, the conversion of ubisemiquinone to ubiquinol. The chain is Na(+)-translocating NADH-quinone reductase subunit E from Chlamydia pneumoniae (Chlamydophila pneumoniae).